The following is a 74-amino-acid chain: Conotoxin Cal27 (74 aa).

The first 19 residues, 1-19 (MSGTGVLLLTLLLLVAMAA), serve as a signal peptide directing secretion.

May contain 4 disulfide bonds. In terms of tissue distribution, expressed by the venom duct.

It localises to the secreted. In terms of biological role, probable neurotoxin. This chain is Conotoxin Cal27, found in Californiconus californicus (California cone).